A 277-amino-acid chain; its full sequence is Thymidylate synthase (277 aa).

Arginine 21 provides a ligand contact to dUMP. Histidine 51 provides a ligand contact to (6R)-5,10-methylene-5,6,7,8-tetrahydrofolate. 139-140 (RR) provides a ligand contact to dUMP. The active-site Nucleophile is the cysteine 159. Residues 179-182 (RSAD), asparagine 190, and 220-222 (HIY) contribute to the dUMP site. Aspartate 182 serves as a coordination point for (6R)-5,10-methylene-5,6,7,8-tetrahydrofolate. Residue alanine 276 coordinates (6R)-5,10-methylene-5,6,7,8-tetrahydrofolate.

The protein belongs to the thymidylate synthase family. Bacterial-type ThyA subfamily. As to quaternary structure, homodimer.

It localises to the cytoplasm. It catalyses the reaction dUMP + (6R)-5,10-methylene-5,6,7,8-tetrahydrofolate = 7,8-dihydrofolate + dTMP. It participates in pyrimidine metabolism; dTTP biosynthesis. In terms of biological role, catalyzes the reductive methylation of 2'-deoxyuridine-5'-monophosphate (dUMP) to 2'-deoxythymidine-5'-monophosphate (dTMP) while utilizing 5,10-methylenetetrahydrofolate (mTHF) as the methyl donor and reductant in the reaction, yielding dihydrofolate (DHF) as a by-product. This enzymatic reaction provides an intracellular de novo source of dTMP, an essential precursor for DNA biosynthesis. The sequence is that of Thymidylate synthase from Ruegeria sp. (strain TM1040) (Silicibacter sp.).